A 387-amino-acid chain; its full sequence is Acetate kinase (387 aa).

Asn-14 contributes to the Mg(2+) binding site. Residue Lys-21 participates in ATP binding. Arg-80 is a binding site for substrate. Asp-137 (proton donor/acceptor) is an active-site residue. Residues 197–201 (HLGNG), 271–273 (DFR), and 319–323 (GIGEN) contribute to the ATP site. A Mg(2+)-binding site is contributed by Glu-373.

This sequence belongs to the acetokinase family. As to quaternary structure, homodimer. Requires Mg(2+) as cofactor. Mn(2+) is required as a cofactor.

Its subcellular location is the cytoplasm. The catalysed reaction is acetate + ATP = acetyl phosphate + ADP. Its pathway is metabolic intermediate biosynthesis; acetyl-CoA biosynthesis; acetyl-CoA from acetate: step 1/2. In terms of biological role, catalyzes the formation of acetyl phosphate from acetate and ATP. Can also catalyze the reverse reaction. This is Acetate kinase from Mycobacterium avium (strain 104).